We begin with the raw amino-acid sequence, 747 residues long: Homeobox-leucine zipper protein GLABRA 2 (747 aa).

Residues 31–112 are disordered; that stretch reads RNASSGSTNP…KKYHRHTTDQ (82 aa). Residues 58-68 show a composition bias toward polar residues; that stretch reads EMSSENSGPTR. Residues 73 to 90 show a composition bias toward acidic residues; the sequence is EDLEGEDHDDEEEEEEDG. Positions 97-107 are enriched in basic residues; sequence TNKRKRKKYHR. Positions 101 to 160 form a DNA-binding region, homeobox; sequence KRKKYHRHTTDQIRHMEALFKETPHPDEKQRQQLSKQLGLAPRQVKFWFQNRRTQIKAIQ. A coiled-coil region spans residues 155-223; the sequence is QIKAIQERHE…LDKLRAALGR (69 aa). Positions 250-489 constitute an START domain; sequence FALEKSRIAE…LQLHCERLVF (240 aa).

Belongs to the HD-ZIP homeobox family. Class IV subfamily. Interacts with GIR1 and GIR2. In terms of tissue distribution, expressed in individual developing trichome cells of the emerging leaf primordia. Expressed in differentiating hairless cells of root epidermis.

It localises to the nucleus. Functionally, transcription factor involved in the determination of epidermal cell identity. Required for correct morphological development and maturation of trichomes. Regulates the frequency of trichome initiation and determines trichome spacing. Acts as a negative factor for root hair development. Required for ectopic repression of root hair development in a subset of epidermal cells. May suppress hair formation in root epidermis by promoting differentiation into hairless epidermal cells. Directly suppresses the bHLH transcription factor genes, RHD6, RSL1, RSL2, LRL1, and LRL2, which have diverse functions in root hair development. Required for normal development of seed coat mucilage. Involved in the control of seed oil accumulation. Acts as a negative regulator of anthocyanin biosynthesis. May directly repress the expression of some component genes from the MYB-bHLH-WD40 (MBW) transcriptional activator complex. The MBW complex activates the transcription of late biosynthesis genes in the flavonoid pathway, leading to the production of anthocyanins. The polypeptide is Homeobox-leucine zipper protein GLABRA 2 (Arabidopsis thaliana (Mouse-ear cress)).